A 481-amino-acid chain; its full sequence is uncharacterized protein (481 aa).

Residues 1–18 (MSRLPSKTKYHSSHRSLN) show a composition bias toward basic residues. The disordered stretch occupies residues 1 to 37 (MSRLPSKTKYHSSHRSLNRKTPLLQRSSETNSLRESG). Over residues 24-34 (LQRSSETNSLR) the composition is skewed to polar residues. Helical transmembrane passes span 172-191 (SIST…AGAI) and 195-214 (AAAG…YLCW).

It is found in the membrane. This is an uncharacterized protein from Coxiella burnetii (strain RSA 493 / Nine Mile phase I).